A 338-amino-acid chain; its full sequence is Eukaryotic translation initiation factor 3 subunit H (338 aa).

The MPN domain occupies 22–154; sequence VQCDGLAVMK…LKAYRLTPQA (133 aa).

It belongs to the eIF-3 subunit H family. In terms of assembly, component of the eukaryotic translation initiation factor 3 (eIF-3) complex. The eIF-3 complex interacts with pix. Interacts with mxt.

The protein localises to the cytoplasm. Component of the eukaryotic translation initiation factor 3 (eIF-3) complex, which is involved in protein synthesis of a specialized repertoire of mRNAs and, together with other initiation factors, stimulates binding of mRNA and methionyl-tRNAi to the 40S ribosome. The eIF-3 complex specifically targets and initiates translation of a subset of mRNAs involved in cell proliferation. This chain is Eukaryotic translation initiation factor 3 subunit H, found in Drosophila melanogaster (Fruit fly).